The primary structure comprises 161 residues: 2-C-methyl-D-erythritol 2,4-cyclodiphosphate synthase (161 aa).

The a divalent metal cation site is built by D10 and H12. Residues 10 to 12 (DVH) and 36 to 37 (HS) each bind 4-CDP-2-C-methyl-D-erythritol 2-phosphate. Residue H44 participates in a divalent metal cation binding. Residues 58–60 (DIG), 63–67 (FSDTD), and R144 each bind 4-CDP-2-C-methyl-D-erythritol 2-phosphate.

Belongs to the IspF family. As to quaternary structure, homotrimer. A divalent metal cation serves as cofactor.

It carries out the reaction 4-CDP-2-C-methyl-D-erythritol 2-phosphate = 2-C-methyl-D-erythritol 2,4-cyclic diphosphate + CMP. It participates in isoprenoid biosynthesis; isopentenyl diphosphate biosynthesis via DXP pathway; isopentenyl diphosphate from 1-deoxy-D-xylulose 5-phosphate: step 4/6. Functionally, involved in the biosynthesis of isopentenyl diphosphate (IPP) and dimethylallyl diphosphate (DMAPP), two major building blocks of isoprenoid compounds. Catalyzes the conversion of 4-diphosphocytidyl-2-C-methyl-D-erythritol 2-phosphate (CDP-ME2P) to 2-C-methyl-D-erythritol 2,4-cyclodiphosphate (ME-CPP) with a corresponding release of cytidine 5-monophosphate (CMP). This is 2-C-methyl-D-erythritol 2,4-cyclodiphosphate synthase from Burkholderia cenocepacia (strain HI2424).